We begin with the raw amino-acid sequence, 138 residues long: Growth factor (138 aa).

An N-terminal signal peptide occupies residues 1–19 (MSMKYLMLLFAAMIIRSFA). N-linked (GlcNAc...) asparagine; by host glycosylation is present at Asn34. Positions 41–81 (AIRLCGPEGDGYCLHGDCIHARDIDGMYCRCSHGYTGIRCQ) constitute an EGF-like domain. 3 disulfides stabilise this stretch: Cys45/Cys58, Cys53/Cys69, and Cys71/Cys80. The N-linked (GlcNAc...) asparagine; by host glycan is linked to Asn95.

The protein belongs to the orthopoxvirus OPG019 family.

The protein localises to the secreted. Stimulates cellular proliferation (hyperplasia)and mobility around infected cells to promote rapid and efficient spread of infection. The protein is Growth factor (OPG019) of Rabbitpox virus (strain Utrecht) (RPV).